The sequence spans 397 residues: Mannonate dehydratase (397 aa).

Belongs to the mannonate dehydratase family. Fe(2+) is required as a cofactor. Mn(2+) serves as cofactor.

It carries out the reaction D-mannonate = 2-dehydro-3-deoxy-D-gluconate + H2O. It functions in the pathway carbohydrate metabolism; pentose and glucuronate interconversion. Catalyzes the dehydration of D-mannonate. The chain is Mannonate dehydratase from Yersinia pestis bv. Antiqua (strain Antiqua).